A 365-amino-acid polypeptide reads, in one-letter code: tRNA/tmRNA (uracil-C(5))-methyltransferase (365 aa).

Gln-189, Tyr-217, Asn-222, Glu-238, and Asp-298 together coordinate S-adenosyl-L-methionine. Cys-323 acts as the Nucleophile in catalysis. Glu-357 (proton acceptor) is an active-site residue.

The protein belongs to the class I-like SAM-binding methyltransferase superfamily. RNA M5U methyltransferase family. TrmA subfamily.

It carries out the reaction uridine(54) in tRNA + S-adenosyl-L-methionine = 5-methyluridine(54) in tRNA + S-adenosyl-L-homocysteine + H(+). It catalyses the reaction uridine(341) in tmRNA + S-adenosyl-L-methionine = 5-methyluridine(341) in tmRNA + S-adenosyl-L-homocysteine + H(+). Its function is as follows. Dual-specificity methyltransferase that catalyzes the formation of 5-methyluridine at position 54 (m5U54) in all tRNAs, and that of position 341 (m5U341) in tmRNA (transfer-mRNA). This Shewanella sediminis (strain HAW-EB3) protein is tRNA/tmRNA (uracil-C(5))-methyltransferase.